Here is a 151-residue protein sequence, read N- to C-terminus: Endolysin (151 aa).

The Zn(2+) site is built by histidine 18, histidine 123, and cysteine 131.

This sequence belongs to the N-acetylmuramoyl-L-alanine amidase 2 family. In terms of assembly, interacts with the viral RNA polymerase. The cofactor is Zn(2+).

The protein resides in the host cytoplasm. The enzyme catalyses Hydrolyzes the link between N-acetylmuramoyl residues and L-amino acid residues in certain cell-wall glycopeptides.. Its activity is regulated as follows. Binding to the viral RNA polymerase inhibits amidase activity. Endolysin with amidase activity that degrades host peptidoglycans and participates with the holin and spanin proteins in the sequential events which lead to the programmed host cell lysis releasing the mature viral particles. Once the holin has permeabilized the host cell membrane, the endolysin can reach the periplasm and breaking down the peptidoglycan layer. Its function is as follows. Plays an important role in the switch between viral transcription and genome replication. Once produced in sufficient amount, interacts with and inhibits the viral RNA polymerase that becomes unable to produce additional late transcripts. This lysozyme-polymerase complex in turn plays an active role in viral genome replication and packaging. This is Endolysin from Enterobacteria phage K11 (Bacteriophage K11).